The following is a 281-amino-acid chain: LIM domain-containing protein G (281 aa).

LIM zinc-binding domains are found at residues 40-101, 141-205, and 206-262; these read LNCS…IKFN, DICT…SKQV, and NCFA…FTQP.

The chain is LIM domain-containing protein G (limG) from Dictyostelium discoideum (Social amoeba).